The chain runs to 536 residues: Casein kinase I homolog RAG8 (536 aa).

Residues 26-42 show a composition bias toward polar residues; that stretch reads HSTQVLHGSGQHGMQPS. Residues 26–68 form a disordered region; that stretch reads HSTQVLHGSGQHGMQPSGNNVLNGLANGATGLQSSASSTSTRD. Positions 43-65 are enriched in low complexity; that stretch reads GNNVLNGLANGATGLQSSASSTS. A Protein kinase domain is found at 77–361; the sequence is YKIGKKIGEG…QKLDGEYDWM (285 aa). ATP contacts are provided by residues 83–91 and K106; that span reads IGEGSFGVL. D196 serves as the catalytic Proton acceptor. Composition is skewed to polar residues over residues 407–420 and 427–436; these read NNLNGSNVPLQSHS and DLTQGVSNAP. The segment at 407 to 524 is disordered; it reads NNLNGSNVPL…NGKVQVADSN (118 aa). Low complexity-rich tracts occupy residues 437–453 and 463–514; these read QQPQQIMSQQQYQQHTQ and AYKQ…NQPQ. Residues C535 and C536 are each lipidated (S-palmitoyl cysteine).

This sequence belongs to the protein kinase superfamily. CK1 Ser/Thr protein kinase family. Casein kinase I subfamily.

The catalysed reaction is L-seryl-[protein] + ATP = O-phospho-L-seryl-[protein] + ADP + H(+). It catalyses the reaction L-threonyl-[protein] + ATP = O-phospho-L-threonyl-[protein] + ADP + H(+). Casein kinases are operationally defined by their preferential utilization of acidic proteins such as caseins as substrates. This chain is Casein kinase I homolog RAG8 (RAG8), found in Kluyveromyces lactis (strain ATCC 8585 / CBS 2359 / DSM 70799 / NBRC 1267 / NRRL Y-1140 / WM37) (Yeast).